The following is a 53-amino-acid chain: Large ribosomal subunit protein bL33 (53 aa).

This sequence belongs to the bacterial ribosomal protein bL33 family.

The chain is Large ribosomal subunit protein bL33 from Ureaplasma parvum serovar 3 (strain ATCC 27815 / 27 / NCTC 11736).